A 426-amino-acid polypeptide reads, in one-letter code: Maintenance of mitochondrial morphology protein 1 (426 aa).

The Lumenal segment spans residues 1–100; sequence MTDSENESTE…KFSGWSFAQG (100 aa). Residues 101 to 121 form a helical membrane-spanning segment; that stretch reads FFVGQLSIVLLFIFFLKFFIF. The Cytoplasmic segment spans residues 122 to 426; sequence SDEPSKSKNP…NTREEKPTEL (305 aa). Positions 194–409 constitute an SMP-LTD domain; the sequence is PAESLDWFNV…EPRFQFVRLP (216 aa).

This sequence belongs to the MMM1 family. In terms of assembly, homodimer. Component of the ER-mitochondria encounter structure (ERMES) or MDM complex, composed of MMM1, MDM10, MDM12 and MDM34. An MMM1 homodimer associates with one molecule of MDM12 on each side in a pairwise head-to-tail manner, and the SMP-LTD domains of MMM1 and MDM12 generate a continuous hydrophobic tunnel for phospholipid trafficking.

It is found in the endoplasmic reticulum membrane. Functionally, component of the ERMES/MDM complex, which serves as a molecular tether to connect the endoplasmic reticulum (ER) and mitochondria. Components of this complex are involved in the control of mitochondrial shape and protein biogenesis, and function in nonvesicular lipid trafficking between the ER and mitochondria. The MDM12-MMM1 subcomplex functions in the major beta-barrel assembly pathway that is responsible for biogenesis of all outer membrane beta-barrel proteins, and acts in a late step after the SAM complex. The MDM10-MDM12-MMM1 subcomplex further acts in the TOM40-specific pathway after the action of the MDM12-MMM1 complex. Essential for establishing and maintaining the structure of mitochondria and maintenance of mtDNA nucleoids. In Saccharomyces cerevisiae (strain AWRI1631) (Baker's yeast), this protein is Maintenance of mitochondrial morphology protein 1.